Consider the following 499-residue polypeptide: Ribulose bisphosphate carboxylase large chain (499 aa).

Asparagine 139 and threonine 189 together coordinate substrate. Lysine 191 (proton acceptor) is an active-site residue. Lysine 193 lines the substrate pocket. Mg(2+) contacts are provided by lysine 217, aspartate 219, and glutamate 220. Lysine 217 carries the post-translational modification N6-carboxylysine. Histidine 309 acts as the Proton acceptor in catalysis. Substrate is bound by residues arginine 310, histidine 342, and serine 394.

Belongs to the RuBisCO large chain family. Type I subfamily. In terms of assembly, heterohexadecamer of 8 large chains and 8 small chains. It depends on Mg(2+) as a cofactor.

The enzyme catalyses 2 (2R)-3-phosphoglycerate + 2 H(+) = D-ribulose 1,5-bisphosphate + CO2 + H2O. It carries out the reaction D-ribulose 1,5-bisphosphate + O2 = 2-phosphoglycolate + (2R)-3-phosphoglycerate + 2 H(+). RuBisCO catalyzes two reactions: the carboxylation of D-ribulose 1,5-bisphosphate, the primary event in carbon dioxide fixation, as well as the oxidative fragmentation of the pentose substrate. Both reactions occur simultaneously and in competition at the same active site. This chain is Ribulose bisphosphate carboxylase large chain, found in Paraburkholderia xenovorans (strain LB400).